Reading from the N-terminus, the 215-residue chain is Peroxiredoxin (215 aa).

In terms of domain architecture, Thioredoxin spans 3–158; the sequence is PLLGDNFPEI…ILRAVKALQV (156 aa). Cys-45 functions as the Cysteine sulfenic acid (-SOH) intermediate in the catalytic mechanism. Arg-121 lines the substrate pocket. Cys-205 and Cys-211 are oxidised to a cystine.

Belongs to the peroxiredoxin family. Prx6 subfamily. Homodecamer. Pentamer of dimers that assemble into a ring structure.

Its subcellular location is the cytoplasm. The enzyme catalyses a hydroperoxide + [thioredoxin]-dithiol = an alcohol + [thioredoxin]-disulfide + H2O. In terms of biological role, thiol-specific peroxidase that catalyzes the reduction of hydrogen peroxide and organic hydroperoxides to water and alcohols, respectively. Plays a role in cell protection against oxidative stress by detoxifying peroxides. This Archaeoglobus fulgidus (strain ATCC 49558 / DSM 4304 / JCM 9628 / NBRC 100126 / VC-16) protein is Peroxiredoxin.